The sequence spans 484 residues: tRNA-2-methylthio-N(6)-dimethylallyladenosine synthase (484 aa).

The MTTase N-terminal domain occupies 36–153 (GKLYIKTHGC…LPELIRARRE (118 aa)). [4Fe-4S] cluster contacts are provided by C45, C82, C116, C190, C194, and C197. A Radical SAM core domain is found at 176–415 (RAEGPSAFVS…HINAHAASIS (240 aa)). The TRAM domain occupies 416-479 (QSMVGSVQRV…SNSLRGRIQL (64 aa)). Residues 428–450 (EGPSRRDPNELTGKSENMRPVNF) form a disordered region.

Belongs to the methylthiotransferase family. MiaB subfamily. As to quaternary structure, monomer. Requires [4Fe-4S] cluster as cofactor.

Its subcellular location is the cytoplasm. It catalyses the reaction N(6)-dimethylallyladenosine(37) in tRNA + (sulfur carrier)-SH + AH2 + 2 S-adenosyl-L-methionine = 2-methylsulfanyl-N(6)-dimethylallyladenosine(37) in tRNA + (sulfur carrier)-H + 5'-deoxyadenosine + L-methionine + A + S-adenosyl-L-homocysteine + 2 H(+). Its function is as follows. Catalyzes the methylthiolation of N6-(dimethylallyl)adenosine (i(6)A), leading to the formation of 2-methylthio-N6-(dimethylallyl)adenosine (ms(2)i(6)A) at position 37 in tRNAs that read codons beginning with uridine. This Xanthomonas axonopodis pv. citri (strain 306) protein is tRNA-2-methylthio-N(6)-dimethylallyladenosine synthase.